The primary structure comprises 309 residues: 4-hydroxy-3-methylbut-2-enyl diphosphate reductase (309 aa).

A [4Fe-4S] cluster-binding site is contributed by Cys13. (2E)-4-hydroxy-3-methylbut-2-enyl diphosphate contacts are provided by His42 and His75. Residues His42 and His75 each coordinate dimethylallyl diphosphate. Positions 42 and 75 each coordinate isopentenyl diphosphate. Cys97 is a binding site for [4Fe-4S] cluster. His125 serves as a coordination point for (2E)-4-hydroxy-3-methylbut-2-enyl diphosphate. His125 is a binding site for dimethylallyl diphosphate. His125 is a binding site for isopentenyl diphosphate. Catalysis depends on Glu127, which acts as the Proton donor. Thr165 provides a ligand contact to (2E)-4-hydroxy-3-methylbut-2-enyl diphosphate. Cys195 is a binding site for [4Fe-4S] cluster. Residues Ser223, Ser224, Asn225, and Ser267 each contribute to the (2E)-4-hydroxy-3-methylbut-2-enyl diphosphate site. Positions 223, 224, 225, and 267 each coordinate dimethylallyl diphosphate. 4 residues coordinate isopentenyl diphosphate: Ser223, Ser224, Asn225, and Ser267.

The protein belongs to the IspH family. Requires [4Fe-4S] cluster as cofactor.

It catalyses the reaction isopentenyl diphosphate + 2 oxidized [2Fe-2S]-[ferredoxin] + H2O = (2E)-4-hydroxy-3-methylbut-2-enyl diphosphate + 2 reduced [2Fe-2S]-[ferredoxin] + 2 H(+). The enzyme catalyses dimethylallyl diphosphate + 2 oxidized [2Fe-2S]-[ferredoxin] + H2O = (2E)-4-hydroxy-3-methylbut-2-enyl diphosphate + 2 reduced [2Fe-2S]-[ferredoxin] + 2 H(+). It functions in the pathway isoprenoid biosynthesis; dimethylallyl diphosphate biosynthesis; dimethylallyl diphosphate from (2E)-4-hydroxy-3-methylbutenyl diphosphate: step 1/1. It participates in isoprenoid biosynthesis; isopentenyl diphosphate biosynthesis via DXP pathway; isopentenyl diphosphate from 1-deoxy-D-xylulose 5-phosphate: step 6/6. Catalyzes the conversion of 1-hydroxy-2-methyl-2-(E)-butenyl 4-diphosphate (HMBPP) into a mixture of isopentenyl diphosphate (IPP) and dimethylallyl diphosphate (DMAPP). Acts in the terminal step of the DOXP/MEP pathway for isoprenoid precursor biosynthesis. The chain is 4-hydroxy-3-methylbut-2-enyl diphosphate reductase from Chlamydia abortus (strain DSM 27085 / S26/3) (Chlamydophila abortus).